The primary structure comprises 72 residues: Large ribosomal subunit protein bL32 (72 aa).

It belongs to the bacterial ribosomal protein bL32 family.

This chain is Large ribosomal subunit protein bL32, found in Dehalococcoides mccartyi (strain ATCC BAA-2100 / JCM 16839 / KCTC 5957 / BAV1).